We begin with the raw amino-acid sequence, 325 residues long: Lipoyl synthase (325 aa).

Positions 68, 73, 79, 94, 98, 101, and 308 each coordinate [4Fe-4S] cluster. The 218-residue stretch at 80-297 folds into the Radical SAM core domain; sequence FGGGTATFMI…ARVANELGFT (218 aa).

Belongs to the radical SAM superfamily. Lipoyl synthase family. Requires [4Fe-4S] cluster as cofactor.

It is found in the cytoplasm. It catalyses the reaction [[Fe-S] cluster scaffold protein carrying a second [4Fe-4S](2+) cluster] + N(6)-octanoyl-L-lysyl-[protein] + 2 oxidized [2Fe-2S]-[ferredoxin] + 2 S-adenosyl-L-methionine + 4 H(+) = [[Fe-S] cluster scaffold protein] + N(6)-[(R)-dihydrolipoyl]-L-lysyl-[protein] + 4 Fe(3+) + 2 hydrogen sulfide + 2 5'-deoxyadenosine + 2 L-methionine + 2 reduced [2Fe-2S]-[ferredoxin]. It functions in the pathway protein modification; protein lipoylation via endogenous pathway; protein N(6)-(lipoyl)lysine from octanoyl-[acyl-carrier-protein]: step 2/2. Its function is as follows. Catalyzes the radical-mediated insertion of two sulfur atoms into the C-6 and C-8 positions of the octanoyl moiety bound to the lipoyl domains of lipoate-dependent enzymes, thereby converting the octanoylated domains into lipoylated derivatives. The protein is Lipoyl synthase of Alcanivorax borkumensis (strain ATCC 700651 / DSM 11573 / NCIMB 13689 / SK2).